The following is a 560-amino-acid chain: DNA ligase B (560 aa).

K124 acts as the N6-AMP-lysine intermediate in catalysis.

This sequence belongs to the NAD-dependent DNA ligase family. LigB subfamily.

It catalyses the reaction NAD(+) + (deoxyribonucleotide)n-3'-hydroxyl + 5'-phospho-(deoxyribonucleotide)m = (deoxyribonucleotide)n+m + AMP + beta-nicotinamide D-nucleotide.. Its function is as follows. Catalyzes the formation of phosphodiester linkages between 5'-phosphoryl and 3'-hydroxyl groups in double-stranded DNA using NAD as a coenzyme and as the energy source for the reaction. In Escherichia coli (strain ATCC 8739 / DSM 1576 / NBRC 3972 / NCIMB 8545 / WDCM 00012 / Crooks), this protein is DNA ligase B.